We begin with the raw amino-acid sequence, 154 residues long: Movement protein (154 aa).

Disordered regions lie at residues 83 to 103 (SSPT…HTRP) and 123 to 154 (WVAT…GRVR).

It belongs to the luteoviruses movement protein family.

Its function is as follows. Transports viral genome to neighboring plant cells directly through plasmosdesmata, without any budding. The movement protein allows efficient cell to cell propagation, by bypassing the host cell wall barrier. The chain is Movement protein from Barley yellow dwarf virus (isolate MAV) (BYDV).